Here is a 265-residue protein sequence, read N- to C-terminus: MGLPGLFCLAVLAASSFSKAREEEITPVVSIAYKVLEVFPKGRWVLITCCAPQPPPPITYSLCGTKNIKVAKKVVKTHEPASFNLNVTLKSSPDLLTYFCWASSTSGAHVDSARLQMHWELWSKPVSELRANFTLQDRGAGPRVEMICQASSGSPPITNSLIGKDGQVHLQQRPCHRQPANFSFLPSQTSDWFWCQAANNANVQHSALTVVPPGGDQKMEDWQGPLESPILALPLYRSTRRLSEEEFGGFRIGNGEVRGRKAAAM.

Residues 1–20 form the signal peptide; it reads MGLPGLFCLAVLAASSFSKA. N-linked (GlcNAc...) asparagine glycans are attached at residues Asn-86 and Asn-132.

As to expression, expressed in fetal liver and bone marrow. Expressed in peripheral blood lymphocyte B cells.

The protein resides in the secreted. In terms of biological role, probable B cell-associated cytokine that plays a role in the regulation of humoral immune responses. Involved in lymphocyte B cell development and immunoglobulin/IgA production. The protein is Protein IL-40 of Homo sapiens (Human).